A 158-amino-acid polypeptide reads, in one-letter code: Phosphopantetheine adenylyltransferase (158 aa).

S9 lines the substrate pocket. Residues 9–10 (SF) and H17 each bind ATP. Substrate contacts are provided by K41, V73, and K87. Residues 88–90 (GLR), E98, and 122–128 (YSFVSSS) contribute to the ATP site.

Belongs to the bacterial CoaD family. Homohexamer. It depends on Mg(2+) as a cofactor.

The protein localises to the cytoplasm. The enzyme catalyses (R)-4'-phosphopantetheine + ATP + H(+) = 3'-dephospho-CoA + diphosphate. The protein operates within cofactor biosynthesis; coenzyme A biosynthesis; CoA from (R)-pantothenate: step 4/5. In terms of biological role, reversibly transfers an adenylyl group from ATP to 4'-phosphopantetheine, yielding dephospho-CoA (dPCoA) and pyrophosphate. This is Phosphopantetheine adenylyltransferase from Mycolicibacterium smegmatis (strain ATCC 700084 / mc(2)155) (Mycobacterium smegmatis).